Consider the following 146-residue polypeptide: Putative pre-16S rRNA nuclease (146 aa).

Belongs to the YqgF nuclease family.

It localises to the cytoplasm. Could be a nuclease involved in processing of the 5'-end of pre-16S rRNA. This chain is Putative pre-16S rRNA nuclease, found in Burkholderia pseudomallei (strain 668).